Consider the following 75-residue polypeptide: uncharacterized protein (75 aa).

The signal sequence occupies residues 1–18; that stretch reads MRKYLSARSMCCSFFSCA.

This is an uncharacterized protein from Treponema pallidum (strain Nichols).